Consider the following 201-residue polypeptide: Large ribosomal subunit protein uL4 (201 aa).

The tract at residues 46–71 is disordered; it reads QKTRAEITGSGKKPWRQKGTGRARSG.

The protein belongs to the universal ribosomal protein uL4 family. In terms of assembly, part of the 50S ribosomal subunit.

In terms of biological role, one of the primary rRNA binding proteins, this protein initially binds near the 5'-end of the 23S rRNA. It is important during the early stages of 50S assembly. It makes multiple contacts with different domains of the 23S rRNA in the assembled 50S subunit and ribosome. Functionally, forms part of the polypeptide exit tunnel. The polypeptide is Large ribosomal subunit protein uL4 (Klebsiella pneumoniae (strain 342)).